The sequence spans 211 residues: SOSS complex subunit B2 (211 aa).

The OB DNA-binding region spans 27-97 (IVLEIGRVTK…TLYTGRGGDL (71 aa)). The segment at 125-211 (NQQNKTSKEQ…GRDPRRASKR (87 aa)) is disordered. Over residues 136-157 (GNSPPNQNAGNGTVPVFSNNNA) the composition is skewed to polar residues. Residues 179-195 (NGPPPVTAGGTPAPPKP) show a composition bias toward pro residues.

The protein belongs to the SOSS-B family. SOSS-B2 subfamily. In terms of assembly, component of the SOSS complex, composed of soss-b (soss-b1/nabp2 or soss-b2/nabp1), soss-a/ints3 and soss-c/inip. SOSS complexes containing soss-b1/nabp2 are more abundant than complexes containing soss-b2/nabp1.

It localises to the nucleus. Functionally, component of the SOSS complex, a multiprotein complex that functions downstream of the MRN complex to promote DNA repair and G2/M checkpoint. In the SOSS complex, acts as a sensor of single-stranded DNA that binds to single-stranded DNA. The SOSS complex associates with DNA lesions and influences diverse endpoints in the cellular DNA damage response including cell-cycle checkpoint activation, recombinational repair and maintenance of genomic stability. Required for efficient homologous recombination-dependent repair of double-strand breaks (DSBs). The chain is SOSS complex subunit B2 (nabp1) from Danio rerio (Zebrafish).